Consider the following 392-residue polypeptide: Queuine tRNA-ribosyltransferase (392 aa).

The active-site Proton acceptor is the aspartate 93. Substrate-binding positions include 93 to 97 (DSGGY), aspartate 147, glutamine 189, and glycine 216. Positions 247 to 253 (GVGAPED) are RNA binding. Aspartate 266 acts as the Nucleophile in catalysis. Residues 271–275 (TRVAR) are RNA binding; important for wobble base 34 recognition. Zn(2+) is bound by residues cysteine 304, cysteine 306, cysteine 309, and histidine 335.

It belongs to the queuine tRNA-ribosyltransferase family. In terms of assembly, homodimer. Within each dimer, one monomer is responsible for RNA recognition and catalysis, while the other monomer binds to the replacement base PreQ1. Zn(2+) serves as cofactor.

It carries out the reaction 7-aminomethyl-7-carbaguanine + guanosine(34) in tRNA = 7-aminomethyl-7-carbaguanosine(34) in tRNA + guanine. It functions in the pathway tRNA modification; tRNA-queuosine biosynthesis. Catalyzes the base-exchange of a guanine (G) residue with the queuine precursor 7-aminomethyl-7-deazaguanine (PreQ1) at position 34 (anticodon wobble position) in tRNAs with GU(N) anticodons (tRNA-Asp, -Asn, -His and -Tyr). Catalysis occurs through a double-displacement mechanism. The nucleophile active site attacks the C1' of nucleotide 34 to detach the guanine base from the RNA, forming a covalent enzyme-RNA intermediate. The proton acceptor active site deprotonates the incoming PreQ1, allowing a nucleophilic attack on the C1' of the ribose to form the product. After dissociation, two additional enzymatic reactions on the tRNA convert PreQ1 to queuine (Q), resulting in the hypermodified nucleoside queuosine (7-(((4,5-cis-dihydroxy-2-cyclopenten-1-yl)amino)methyl)-7-deazaguanosine). This Dehalococcoides mccartyi (strain ATCC BAA-2100 / JCM 16839 / KCTC 5957 / BAV1) protein is Queuine tRNA-ribosyltransferase.